Here is a 292-residue protein sequence, read N- to C-terminus: Homoserine kinase (292 aa).

84–94 (PISRGLGSSSA) is a binding site for ATP.

Belongs to the GHMP kinase family. Homoserine kinase subfamily.

The protein localises to the cytoplasm. It carries out the reaction L-homoserine + ATP = O-phospho-L-homoserine + ADP + H(+). The protein operates within amino-acid biosynthesis; L-threonine biosynthesis; L-threonine from L-aspartate: step 4/5. In terms of biological role, catalyzes the ATP-dependent phosphorylation of L-homoserine to L-homoserine phosphate. This is Homoserine kinase from Sulfurovum sp. (strain NBC37-1).